The following is a 440-amino-acid chain: RNA polymerase II C-terminal domain phosphatase-like 4 (440 aa).

The segment covering 1-36 (MSVASDSPVHSSSSSDDLAAFLDAELDSASDASSGP) has biased composition (low complexity). Positions 1 to 49 (MSVASDSPVHSSSSSDDLAAFLDAELDSASDASSGPSEEEEAEDDVESG) are disordered. The segment covering 37-47 (SEEEEAEDDVE) has biased composition (acidic residues). The 175-residue stretch at 118–292 (QRQRKLYLVL…DHRYKSLSEL (175 aa)) folds into the FCP1 homology domain. In terms of domain architecture, BRCT spans 337–429 (VRKEILKGCK…MKQPEENFGL (93 aa)).

As to quaternary structure, interacts with RAP74. It depends on Mg(2+) as a cofactor. Co(2+) serves as cofactor. The cofactor is Mn(2+).

The protein localises to the nucleus. The enzyme catalyses O-phospho-L-seryl-[protein] + H2O = L-seryl-[protein] + phosphate. It carries out the reaction O-phospho-L-threonyl-[protein] + H2O = L-threonyl-[protein] + phosphate. Functionally, processively dephosphorylates 'Ser-2' and/or 'Ser-5' of the heptad repeats YSPTSPS in the C-terminal domain of the largest RNA polymerase II subunit (RPB1). This promotes the activity of RNA polymerase II. Required for normal plant growth. This Arabidopsis thaliana (Mouse-ear cress) protein is RNA polymerase II C-terminal domain phosphatase-like 4 (CPL4).